Here is a 230-residue protein sequence, read N- to C-terminus: Uracil-DNA glycosylase (230 aa).

Residue D72 is the Proton acceptor of the active site.

The protein belongs to the uracil-DNA glycosylase (UDG) superfamily. UNG family.

It localises to the cytoplasm. The enzyme catalyses Hydrolyzes single-stranded DNA or mismatched double-stranded DNA and polynucleotides, releasing free uracil.. Functionally, excises uracil residues from the DNA which can arise as a result of misincorporation of dUMP residues by DNA polymerase or due to deamination of cytosine. The polypeptide is Uracil-DNA glycosylase (Wolinella succinogenes (strain ATCC 29543 / DSM 1740 / CCUG 13145 / JCM 31913 / LMG 7466 / NCTC 11488 / FDC 602W) (Vibrio succinogenes)).